Consider the following 329-residue polypeptide: Acetyl-coenzyme A carboxylase carboxyl transferase subunit alpha (329 aa).

The region spanning 40–294 (QLETLAARRR…REAIERHLDD (255 aa)) is the CoA carboxyltransferase C-terminal domain.

This sequence belongs to the AccA family. Acetyl-CoA carboxylase is a heterohexamer composed of biotin carboxyl carrier protein (AccB), biotin carboxylase (AccC) and two subunits each of ACCase subunit alpha (AccA) and ACCase subunit beta (AccD).

The protein localises to the cytoplasm. It catalyses the reaction N(6)-carboxybiotinyl-L-lysyl-[protein] + acetyl-CoA = N(6)-biotinyl-L-lysyl-[protein] + malonyl-CoA. It functions in the pathway lipid metabolism; malonyl-CoA biosynthesis; malonyl-CoA from acetyl-CoA: step 1/1. Functionally, component of the acetyl coenzyme A carboxylase (ACC) complex. First, biotin carboxylase catalyzes the carboxylation of biotin on its carrier protein (BCCP) and then the CO(2) group is transferred by the carboxyltransferase to acetyl-CoA to form malonyl-CoA. The sequence is that of Acetyl-coenzyme A carboxylase carboxyl transferase subunit alpha from Prochlorococcus marinus (strain MIT 9303).